The primary structure comprises 1567 residues: Myosin-2A (1567 aa).

Residues 4–57 (EVGTRCWYPSKEQGWIGAEVTKNDLKDGTYFMELTLEDNEVVNVETKDLTNEKD) form the Myosin N-terminal SH3-like domain. Residues 70-786 (ESTEDLTTLS…MLAYFEKLRS (717 aa)) form the Myosin motor domain. 164–171 (GESGAGKT) contributes to the ATP binding site. The tract at residues 446–526 (FIGVLDIYGF…LGILSLLDEE (81 aa)) is actin-binding. The disordered stretch occupies residues 619–640 (EEAKKNAASQDQKQLKKPTPIR). IQ domains are found at residues 789 to 818 (MNSAIVLIQKHIRSKYYRKQYMLMKASLSL), 812 to 836 (MKASLSLLGAYSKGTVIRQRVEYEL), 837 to 859 (EQHAATLIQTMYRGYSKRSYISG), 860 to 884 (VISSIVKLQSRIREELEQREMQSKY), 885 to 907 (ESNAAISIQSRIRAFVPRKAYES), and 908 to 937 (KRRDTIVVQSLIRRRIAQRDFKKLKADAKS). Residues 947–1091 (KLENKVIQLT…LAHLQTSIAL (145 aa)) adopt a coiled-coil conformation. A non alpha-helical, tail domain region spans residues 1092–1567 (GTVTTNTNIV…VAQQVTVPDA (476 aa)). A Dilute domain is found at 1230-1505 (AQVLTTIQKV…LKYVADIVKK (276 aa)).

It belongs to the TRAFAC class myosin-kinesin ATPase superfamily. Myosin family. Homodimer. Interacts with calmodulin (CMD1) and the myosin light chain MLC1 through its IQ repeats.

In terms of biological role, myosin heavy chain that is required for the cell cycle-regulated transport of various organelles and proteins for their segregation. Functions by binding with its tail domain to receptor proteins on organelles and exerting force with its N-terminal motor domain against actin filaments, thereby transporting its cargo along polarized actin cables. In Naumovozyma castellii (Yeast), this protein is Myosin-2A (MYO2A).